A 319-amino-acid chain; its full sequence is Probable arabinan endo-1,5-alpha-L-arabinosidase A (319 aa).

The N-terminal stretch at 1 to 19 (MYLQSSLALVLLRAAVVHG) is a signal peptide. Aspartate 34 serves as the catalytic Proton acceptor. Asparagine 53 is a glycosylation site (N-linked (GlcNAc...) asparagine). Glutamate 198 (proton donor) is an active-site residue.

Belongs to the glycosyl hydrolase 43 family.

The protein localises to the secreted. It catalyses the reaction Endohydrolysis of (1-&gt;5)-alpha-arabinofuranosidic linkages in (1-&gt;5)-arabinans.. Its pathway is glycan metabolism; L-arabinan degradation. In terms of biological role, endo-1,5-alpha-L-arabinanase involved in degradation of pectin. Its preferred substrate is linear 1,5-alpha-L-arabinan. The chain is Probable arabinan endo-1,5-alpha-L-arabinosidase A (abnA) from Aspergillus flavus (strain ATCC 200026 / FGSC A1120 / IAM 13836 / NRRL 3357 / JCM 12722 / SRRC 167).